The sequence spans 809 residues: TLR4 interactor with leucine rich repeats (809 aa).

The first 25 residues, methionine 1 to serine 25, serve as a signal peptide directing secretion. Residues valine 26 to serine 57 enclose the LRRNT domain. Residues valine 26 to glutamine 694 lie on the Extracellular side of the membrane. LRR repeat units follow at residues valine 61–arginine 81, glutamine 84–lysine 105, arginine 108–proline 129, lysine 132–glycine 153, serine 156–proline 177, asparagine 180–glutamine 201, lysine 204–alanine 223, serine 230–histidine 251, arginine 254–glycine 275, alanine 278–glutamate 298, serine 302–histidine 323, and arginine 326–alanine 347. The N-linked (GlcNAc...) asparagine glycan is linked to asparagine 73. The 58-residue stretch at asparagine 359–aspartate 416 folds into the LRRCT domain. Asparagine 411 carries an N-linked (GlcNAc...) asparagine glycan. 2 disordered regions span residues glycine 412–leucine 462 and arginine 483–glutamine 563. A compositionally biased stretch (polar residues) spans proline 421 to glutamate 436. Over residues glycine 488–serine 506 the composition is skewed to low complexity. Over residues alanine 521–aspartate 543 the composition is skewed to polar residues. Residues alanine 554–glutamine 563 show a composition bias toward low complexity. A glycan (N-linked (GlcNAc...) asparagine) is linked at asparagine 587. A helical transmembrane segment spans residues leucine 695–tryptophan 715. The Cytoplasmic segment spans residues glycine 716–aspartate 809. At serine 796 the chain carries Phosphoserine.

Belongs to the lipopolysaccharide (LPS) receptor, a multi-protein complex containing at least CD14, MD-2 and TLR4. Interacts with TLR4; this interaction is greatly enhanced by LPS stimulation. Interacts with LPS. Post-translationally, N-glycolysaled. Highly expressed in brain, spinal cord and lung.

The protein localises to the membrane. Component of the TLR4 signaling complex. Mediates the innate immune response to bacterial lipopolysaccharide (LPS) leading to cytokine secretion. This is TLR4 interactor with leucine rich repeats (Tril) from Mus musculus (Mouse).